Reading from the N-terminus, the 188-residue chain is Archaetidylinositol phosphate synthase (188 aa).

2 helical membrane passes run 20-40 (LASLGITPNQLTIIGFLITLL) and 51-71 (ILAGIILAVGAFLDALDGALA). Mg(2+) is bound by residues Asp64, Asp67, Asp85, and Asp89. Asp89 acts as the Proton acceptor in catalysis. Helical transmembrane passes span 96–116 (ILFGIALGGLVRWDVTFLTLI) and 147–167 (IIIIFIASLFNAVKIGVYLVA).

This sequence belongs to the CDP-alcohol phosphatidyltransferase class-I family. Mn(2+) is required as a cofactor. Requires Mg(2+) as cofactor.

Its subcellular location is the cell membrane. The catalysed reaction is CDP-2,3-bis-O-(phytanyl)-sn-glycerol + 1D-myo-inositol 3-phosphate = saturated 1-archaetidyl-1D-myo-inositol 3-phosphate + CMP + H(+). Its pathway is lipid metabolism; phospholipid metabolism. In terms of biological role, catalyzes the formation of archaetidylinositol phosphate (AIP) from CDP-archaeol (CDP-ArOH or CDP-2,3-bis-(O-phytanyl)-sn-glycerol) and 1L-myo-inositol 1-phosphate (IP or 1D-myo-inositol 3-phosphate). AIP is a precursor of archaetidyl-myo-inositol (AI), an ether-type inositol phospholipid ubiquitously distributed in archaea membranes and essential for glycolipid biosynthesis in archaea. The chain is Archaetidylinositol phosphate synthase from Pyrococcus horikoshii (strain ATCC 700860 / DSM 12428 / JCM 9974 / NBRC 100139 / OT-3).